Here is a 489-residue protein sequence, read N- to C-terminus: uncharacterized protein (489 aa).

4 disordered regions span residues 1 to 94 (MIEE…GSLD), 109 to 229 (NRNQ…SDDD), 300 to 389 (DDNI…TSIQ), and 428 to 461 (SESG…TLVK). Low complexity-rich tracts occupy residues 43-53 (LLVQQSNQSVK) and 64-77 (SNGF…NIHD). Over residues 121–138 (NFSEDDEDDDAEDDDSSD) the composition is skewed to acidic residues. The segment covering 144–154 (KKNKPKKPSKL) has biased composition (basic residues). Residues 155-164 (MKHDSVDGKN) are compositionally biased toward basic and acidic residues. Basic residues predominate over residues 173 to 199 (SKKKVQHQLKEKNKKKGIKNDKKKSKP). Over residues 308–343 (NDNDNDNDDDNDNDNDNDNDNDNDNDDDENGEDNGE) the composition is skewed to acidic residues. Low complexity-rich tracts occupy residues 344 to 389 (DLNI…TSIQ) and 433 to 449 (SISS…SSKS).

This is an uncharacterized protein from Dictyostelium discoideum (Social amoeba).